The following is a 196-amino-acid chain: Probable nicotinate-nucleotide adenylyltransferase (196 aa).

This sequence belongs to the NadD family.

It catalyses the reaction nicotinate beta-D-ribonucleotide + ATP + H(+) = deamido-NAD(+) + diphosphate. Its pathway is cofactor biosynthesis; NAD(+) biosynthesis; deamido-NAD(+) from nicotinate D-ribonucleotide: step 1/1. Functionally, catalyzes the reversible adenylation of nicotinate mononucleotide (NaMN) to nicotinic acid adenine dinucleotide (NaAD). In Caldicellulosiruptor saccharolyticus (strain ATCC 43494 / DSM 8903 / Tp8T 6331), this protein is Probable nicotinate-nucleotide adenylyltransferase.